Consider the following 165-residue polypeptide: Cyclic pyranopterin monophosphate synthase (165 aa).

Substrate contacts are provided by residues 76-78 (MCH) and 113-114 (IE). The active site involves Asp128.

This sequence belongs to the MoaC family. In terms of assembly, homohexamer; trimer of dimers.

The catalysed reaction is (8S)-3',8-cyclo-7,8-dihydroguanosine 5'-triphosphate = cyclic pyranopterin phosphate + diphosphate. The protein operates within cofactor biosynthesis; molybdopterin biosynthesis. Its function is as follows. Catalyzes the conversion of (8S)-3',8-cyclo-7,8-dihydroguanosine 5'-triphosphate to cyclic pyranopterin monophosphate (cPMP). The sequence is that of Cyclic pyranopterin monophosphate synthase from Limosilactobacillus fermentum (strain NBRC 3956 / LMG 18251) (Lactobacillus fermentum).